Reading from the N-terminus, the 167-residue chain is I-Kappa-B like protein F2 (167 aa).

ANK repeat units lie at residues 54–86 (HGKQCVHIVSNPGIADPQEKLKLLMEWGADING), 91–121 (FGNTPLHIAAYTQNHKLATWLCNQPGINMGI), and 125–154 (LFKTPYYVACERHDLKIMNILRAKGTRCGV).

Belongs to the polydnaviridae I-Kappa-B-like protein family.

Suppresses the host immune response through NF-kappa-B inactivation. Possesses ankyrin repeat domains required for NF-kappa-B binding but lacks the regulatory regions required for dissociation from NF-kappa-B and degradation. Therefore, prevents host NF-kappa-B release and subsequent activation. This Microplitis demolitor bracovirus (isolate Webb) (MdBV) protein is I-Kappa-B like protein F2 (F3).